An 882-amino-acid polypeptide reads, in one-letter code: DNA polymerase 1 (882 aa).

The disordered stretch occupies residues 1 to 31 (MTKQLTLFDIPSSKPAKSEQNTQQSQQSAPV). The segment covering 18–29 (SEQNTQQSQQSA) has biased composition (polar residues).

Belongs to the DNA polymerase type-B family. Interacts with PCNA subunit PCNA2 and weakly with PCNA3.

It catalyses the reaction DNA(n) + a 2'-deoxyribonucleoside 5'-triphosphate = DNA(n+1) + diphosphate. With respect to regulation, DNA synthesis is stimulated by PCNA heterotrimers. This polymerase possesses two enzymatic activities: DNA synthesis (polymerase) and an exonucleolytic activity that degrades single-stranded DNA in the 3'- to 5'-direction. DNA polymerase I, DNA ligase and the flap endonuclease may be constitutively associated with the PCNA heterotrimer forming a scanning complex able to couple DNA synthesis and Okazaki fragment maturation. The polypeptide is DNA polymerase 1 (dpo1) (Saccharolobus solfataricus (strain ATCC 35092 / DSM 1617 / JCM 11322 / P2) (Sulfolobus solfataricus)).